A 235-amino-acid chain; its full sequence is Voltage-gated hydrogen channel 1 (235 aa).

The Cytoplasmic segment spans residues 1 to 62; that stretch reads MSRYLKHFTV…VMKKLFSSRR (62 aa). Residues 63–83 form a helical membrane-spanning segment; sequence FQIVIVFLVIVDALLVLGELL. Topologically, residues 84-100 are extracellular; that stretch reads MDLKIIHPDKYHIAPKV. Residues 101–123 traverse the membrane as a helical segment; the sequence is FHYLSLSILTIFLVEVGFKIFVY. Residues 124 to 131 lie on the Cytoplasmic side of the membrane; it reads GREFFHHK. A helical transmembrane segment spans residues 132-152; it reads FEVLDSIVVVVSFILDLVLLF. The Extracellular portion of the chain corresponds to 153 to 159; sequence REHEFEA. Residues 160-180 form a helical membrane-spanning segment; it reads VGLLILLRLWRVARIINGIIL. Residues 181 to 235 lie on the Cytoplasmic side of the membrane; it reads SVKTRSEQQVSKLKQVNLKLATKVEQLQHSCVEKEQEIERLTRMLKQHGLLSEQT. Residues 187–228 are a coiled coil; that stretch reads EQQVSKLKQVNLKLATKVEQLQHSCVEKEQEIERLTRMLKQH.

The protein belongs to the hydrogen channel family. In terms of assembly, homodimer.

Its subcellular location is the membrane. The protein resides in the cell membrane. Functionally, mediates the voltage-dependent proton permeability of excitable membranes. Forms a proton-selective channel through which protons may pass in accordance with their electrochemical gradient. In Gallus gallus (Chicken), this protein is Voltage-gated hydrogen channel 1 (HVCN1).